A 290-amino-acid polypeptide reads, in one-letter code: Glutamate racemase (290 aa).

Residues 24–25 (DS) and 56–57 (YG) each bind substrate. Cysteine 87 serves as the catalytic Proton donor/acceptor. Substrate is bound at residue 88 to 89 (NT). Cysteine 199 (proton donor/acceptor) is an active-site residue. A substrate-binding site is contributed by 200-201 (TH). The tract at residues 271 to 290 (GADGASLPDPPSPRIELTTT) is disordered.

This sequence belongs to the aspartate/glutamate racemases family.

It catalyses the reaction L-glutamate = D-glutamate. The protein operates within cell wall biogenesis; peptidoglycan biosynthesis. Functionally, provides the (R)-glutamate required for cell wall biosynthesis. The chain is Glutamate racemase from Deinococcus radiodurans (strain ATCC 13939 / DSM 20539 / JCM 16871 / CCUG 27074 / LMG 4051 / NBRC 15346 / NCIMB 9279 / VKM B-1422 / R1).